Reading from the N-terminus, the 134-residue chain is U35-theraphotoxin-Cg1a (134 aa).

A signal peptide spans Met-1 to Gly-18. Residues Asp-19 to Lys-56 constitute a propeptide that is removed on maturation.

In terms of tissue distribution, expressed by the venom gland.

It localises to the secreted. Its function is as follows. Probable secreted venom toxin. The polypeptide is U35-theraphotoxin-Cg1a (Chilobrachys guangxiensis (Chinese earth tiger tarantula)).